The following is a 388-amino-acid chain: Succinate--CoA ligase [ADP-forming] subunit beta (388 aa).

Positions 9–244 (KEILRKYNVP…LDEEDANEIE (236 aa)) constitute an ATP-grasp domain. ATP contacts are provided by residues lysine 46, 53-55 (GRG), glutamate 99, alanine 102, and glutamate 107. Mg(2+)-binding residues include asparagine 199 and aspartate 213. Substrate contacts are provided by residues asparagine 264 and 321-323 (GIM).

It belongs to the succinate/malate CoA ligase beta subunit family. Heterotetramer of two alpha and two beta subunits. The cofactor is Mg(2+).

It catalyses the reaction succinate + ATP + CoA = succinyl-CoA + ADP + phosphate. It carries out the reaction GTP + succinate + CoA = succinyl-CoA + GDP + phosphate. It functions in the pathway carbohydrate metabolism; tricarboxylic acid cycle; succinate from succinyl-CoA (ligase route): step 1/1. Its function is as follows. Succinyl-CoA synthetase functions in the citric acid cycle (TCA), coupling the hydrolysis of succinyl-CoA to the synthesis of either ATP or GTP and thus represents the only step of substrate-level phosphorylation in the TCA. The beta subunit provides nucleotide specificity of the enzyme and binds the substrate succinate, while the binding sites for coenzyme A and phosphate are found in the alpha subunit. In Ralstonia nicotianae (strain ATCC BAA-1114 / GMI1000) (Ralstonia solanacearum), this protein is Succinate--CoA ligase [ADP-forming] subunit beta.